Here is a 1322-residue protein sequence, read N- to C-terminus: Mediator of RNA polymerase II transcription subunit 12 (1322 aa).

The segment at 1-21 (MSPSKYLLTPPEELHPLTDSN) is disordered.

The protein belongs to the Mediator complex subunit 12 family. As to quaternary structure, component of the SRB8-11 complex, which itself associates with the Mediator complex.

It localises to the nucleus. In terms of biological role, component of the SRB8-11 complex. The SRB8-11 complex is a regulatory module of the Mediator complex which is itself involved in regulation of basal and activated RNA polymerase II-dependent transcription. The SRB8-11 complex may be involved in the transcriptional repression of a subset of genes regulated by Mediator. It may inhibit the association of the Mediator complex with RNA polymerase II to form the holoenzyme complex. The polypeptide is Mediator of RNA polymerase II transcription subunit 12 (SRB8) (Kluyveromyces lactis (strain ATCC 8585 / CBS 2359 / DSM 70799 / NBRC 1267 / NRRL Y-1140 / WM37) (Yeast)).